Here is a 459-residue protein sequence, read N- to C-terminus: N-chimaerin (459 aa).

An N-acetylalanine modification is found at Ala2. Positions 49-135 constitute an SH2 domain; it reads EFHGMISREA…IETKAAEYIA (87 aa). At Thr192 the chain carries Phosphothreonine. Residues 205 to 255 form a Phorbol-ester/DAG-type zinc finger; that stretch reads IHNFKVHTFRGPHWCEYCANFMWGLIAQGVKCADCGLNVHKQCSKMVPNDC. A Rho-GAP domain is found at 268–459; sequence CDLTTLVKAH…LLIKNEDILF (192 aa). Phosphothreonine is present on Thr340.

As to quaternary structure, interacts with EPHA4; effector of EPHA4 in axon guidance linking EPHA4 activation to RAC1 regulation. Phosphorylated. Phosphorylation is EPHA4 kinase activity-dependent. In neurons in brain regions that are involved in learning and memory processes.

In terms of biological role, GTPase-activating protein for p21-rac and a phorbol ester receptor. Involved in the assembly of neuronal locomotor circuits as a direct effector of EPHA4 in axon guidance. The sequence is that of N-chimaerin (CHN1) from Homo sapiens (Human).